Consider the following 229-residue polypeptide: Large ribosomal subunit protein uL1 (229 aa).

Belongs to the universal ribosomal protein uL1 family. As to quaternary structure, part of the 50S ribosomal subunit.

Functionally, binds directly to 23S rRNA. The L1 stalk is quite mobile in the ribosome, and is involved in E site tRNA release. Its function is as follows. Protein L1 is also a translational repressor protein, it controls the translation of the L11 operon by binding to its mRNA. The protein is Large ribosomal subunit protein uL1 of Flavobacterium psychrophilum (strain ATCC 49511 / DSM 21280 / CIP 103535 / JIP02/86).